Reading from the N-terminus, the 415-residue chain is MPESTPSLPDWLSRGMADLFPAGDPTDADQALAARLAQAEKEGRPLRVKLGIDPTGSNIHLGHSILFRKLRAFQDAGHTAVLIIGDFTARIGDPTGKCATRVQLSKEDVAANASTYLRQLGQDQPKETALLDFETPGRLEVRYNSEWLEGMDLPAVIGLLGTGTVGQMLAKDDFSKRYGSGTPIALHEFLYPLLQGYDSVAVNADVELGGTDQKFNVAMGRDLQRHFNKGTQFGLLLPILVGLDGVQKMSKSLGNVVGLEEDPLSMYSKLEKVGDGAINDYVTLLTDLDLATLPENPREKQKAMALAVTASRHGMEAAQKAQLDAASLVGGAGDAATEVPGASLAEVNFPAKAFYLLSAVGICASSSEARRQIKGGAVRLEGEKIGDPNQEFASAAELEGKVLQLGKKTFRRLTA.

The 'HIGH' region signature appears at proline 54–histidine 63. Positions lysine 248–serine 252 match the 'KMSKS' region motif. ATP is bound at residue lysine 251. The region spanning alanine 351–alanine 415 is the S4 RNA-binding domain.

Belongs to the class-I aminoacyl-tRNA synthetase family. TyrS type 2 subfamily. Homodimer.

It localises to the cytoplasm. The enzyme catalyses tRNA(Tyr) + L-tyrosine + ATP = L-tyrosyl-tRNA(Tyr) + AMP + diphosphate + H(+). Functionally, catalyzes the attachment of tyrosine to tRNA(Tyr) in a two-step reaction: tyrosine is first activated by ATP to form Tyr-AMP and then transferred to the acceptor end of tRNA(Tyr). The protein is Tyrosine--tRNA ligase of Parasynechococcus marenigrum (strain WH8102).